Consider the following 224-residue polypeptide: Small ribosomal subunit protein uS3 (224 aa).

One can recognise a KH type-2 domain in the interval 38 to 106 (LREFVKEKLG…EVYLNVVEVR (69 aa)).

It belongs to the universal ribosomal protein uS3 family. As to quaternary structure, part of the 30S ribosomal subunit. Forms a tight complex with proteins S10 and S14.

Its function is as follows. Binds the lower part of the 30S subunit head. Binds mRNA in the 70S ribosome, positioning it for translation. The sequence is that of Small ribosomal subunit protein uS3 from Anaeromyxobacter dehalogenans (strain 2CP-1 / ATCC BAA-258).